A 261-amino-acid chain; its full sequence is Recombination protein bet (261 aa).

Functionally, gene bet protein functions in general recombination and in the late, rolling-circle mode of lambda DNA replication. Has a function similar to that of E.coli recT. It is a single-stranded DNA binding protein that can promote renaturation of DNA. This chain is Recombination protein bet (bet), found in Escherichia coli (Bacteriophage lambda).